The primary structure comprises 234 residues: Bromodomain-containing protein DDB_G0271118 (234 aa).

Residues 1-60 form the Bromo domain; sequence MDLGTIKGELDNNGYSTIKDFTADVRLMFENALTYNADSSPIWKHAKTLLYFHRKHDEHV. Residues 134–194 show a composition bias toward low complexity; the sequence is NNNSNNNNNN…SSSSSSSSSS (61 aa). The tract at residues 134 to 209 is disordered; it reads NNNSNNNNNN…KKYSDEERRN (76 aa).

The chain is Bromodomain-containing protein DDB_G0271118 from Dictyostelium discoideum (Social amoeba).